Here is a 186-residue protein sequence, read N- to C-terminus: Spermidine N(1)-acetyltransferase (186 aa).

The N-acetyltransferase domain maps to 7 to 167; it reads VKLRPLERED…NAIRMCIFQH (161 aa). Residues M30, E35, E43, and 51 to 54 each bind spermine; that span reads HIHD. E35 contacts Mg(2+). Spermidine contacts are provided by E35 and E43. E76 is a binding site for Mg(2+). 85 to 87 serves as a coordination point for spermine; it reads EFQ. Residues 88–90, 95–101, and 128–137 each bind acetyl-CoA; these read III, QGKGLAT, and NEKAIHIYRK. Residue Y135 is the Proton donor of the active site.

The protein belongs to the acetyltransferase family. In terms of assembly, homododecamer.

It is found in the cytoplasm. It carries out the reaction an alkane-alpha,omega-diamine + acetyl-CoA = an N-acetylalkane-alpha,omega-diamine + CoA + H(+). The enzyme catalyses spermidine + acetyl-CoA = N(1)-acetylspermidine + CoA + H(+). It catalyses the reaction spermidine + acetyl-CoA = N(8)-acetylspermidine + CoA + H(+). The catalysed reaction is spermine + acetyl-CoA = N(1)-acetylspermine + CoA + H(+). Its pathway is amine and polyamine degradation; spermidine degradation. It functions in the pathway amine and polyamine degradation; spermine degradation. Its function is as follows. Involved in the protection against polyamine toxicity by regulating their concentration. Catalyzes the transfer of an acetyl group from acetyl coenzyme A (AcCoA) to the primary amino groups of spermidine to yield N(1)- and N(8)-acetylspermidine. It can also use spermine. In Escherichia coli O157:H7, this protein is Spermidine N(1)-acetyltransferase (speG).